The primary structure comprises 64 residues: MSSKCSNCDCSDSSQCTKKGYSFDLVIVETENRSMDTVIMDAPAAENGGNCKCGPSCACVDCKC.

This sequence belongs to the metallothionein superfamily. Type 15 family.

Its function is as follows. Metallothioneins have a high content of cysteine residues that bind various heavy metals. This chain is Metallothionein-like protein 1 (MT1), found in Prunus avium (Cherry).